A 336-amino-acid polypeptide reads, in one-letter code: Dihydroorotate dehydrogenase (quinone) (336 aa).

FMN contacts are provided by residues 62-66 (AGLDK) and Thr-86. Residue Lys-66 participates in substrate binding. 111 to 115 (NRMGF) provides a ligand contact to substrate. FMN contacts are provided by Asn-139 and Asn-172. Asn-172 is a binding site for substrate. The Nucleophile role is filled by Ser-175. Substrate is bound at residue Asn-177. Residues Lys-217 and Thr-245 each coordinate FMN. 246–247 (NT) is a binding site for substrate. Residues Gly-268, Gly-297, and 318–319 (YS) each bind FMN.

Belongs to the dihydroorotate dehydrogenase family. Type 2 subfamily. In terms of assembly, monomer. The cofactor is FMN.

It is found in the cell membrane. It carries out the reaction (S)-dihydroorotate + a quinone = orotate + a quinol. Its pathway is pyrimidine metabolism; UMP biosynthesis via de novo pathway; orotate from (S)-dihydroorotate (quinone route): step 1/1. Functionally, catalyzes the conversion of dihydroorotate to orotate with quinone as electron acceptor. This chain is Dihydroorotate dehydrogenase (quinone), found in Citrobacter koseri (strain ATCC BAA-895 / CDC 4225-83 / SGSC4696).